The following is a 322-amino-acid chain: Epiphycan (322 aa).

A signal peptide spans 1–19 (MKTLAGLVLGLVIFDAAVT). A glycan (O-linked (GalNAc...) threonine) is linked at Thr-60. Ser-64 is a glycosylation site (O-linked (Xyl...) (dermatan sulfate) serine). The segment at 64-101 (SGNRELLTPPPQPEKAQEEEEEEESTPRLIDGSSPQEP) is disordered. The O-linked (GalNAc...) serine glycan is linked to Ser-96. The LRRNT domain occupies 106-143 (VLGPHTNEDFPTCLLCTCISTTVYCDDHELDAIPPLPK). Cys-118 and Cys-130 form a disulfide bridge. LRR repeat units follow at residues 144 to 165 (NTAY…DFAS), 168 to 189 (DLKR…AFRK), 192 to 213 (QLRE…PTTL), 238 to 258 (DLHH…PLPE), and 259 to 280 (NLRA…TFCN). A disulfide bridge connects residues Cys-279 and Cys-312. N-linked (GlcNAc...) asparagine glycosylation is found at Asn-283 and Asn-302. The stretch at 290 to 310 (ALEDIRLDGNPINLSKTPQAY) is one LRR 6 repeat.

This sequence belongs to the small leucine-rich proteoglycan (SLRP) family. SLRP class III subfamily. The O-linked polysaccharides on Thr-60 and Ser-96 are probably the mucin type linked to GalNAc. There is one glycosaminoglycan chain, known to be dermatan sulfate, and it is probably the O-glycosylation at Ser-64. Cartilage, ligament, and placenta.

Its subcellular location is the secreted. The protein localises to the extracellular space. The protein resides in the extracellular matrix. Its function is as follows. May have a role in bone formation and also in establishing the ordered structure of cartilage through matrix organization. This is Epiphycan (EPYC) from Homo sapiens (Human).